We begin with the raw amino-acid sequence, 215 residues long: Octanoyltransferase (215 aa).

Residues 33-209 enclose the BPL/LPL catalytic domain; sequence PDTPDQLWLV…QFARKLGYET (177 aa). Substrate contacts are provided by residues 72–79, 139–141, and 152–154; these read RGGQVTYH, SLG, and GLA. Residue Cys170 is the Acyl-thioester intermediate of the active site.

Belongs to the LipB family.

Its subcellular location is the cytoplasm. The enzyme catalyses octanoyl-[ACP] + L-lysyl-[protein] = N(6)-octanoyl-L-lysyl-[protein] + holo-[ACP] + H(+). It participates in protein modification; protein lipoylation via endogenous pathway; protein N(6)-(lipoyl)lysine from octanoyl-[acyl-carrier-protein]: step 1/2. Its function is as follows. Catalyzes the transfer of endogenously produced octanoic acid from octanoyl-acyl-carrier-protein onto the lipoyl domains of lipoate-dependent enzymes. Lipoyl-ACP can also act as a substrate although octanoyl-ACP is likely to be the physiological substrate. The polypeptide is Octanoyltransferase (Cellvibrio japonicus (strain Ueda107) (Pseudomonas fluorescens subsp. cellulosa)).